A 193-amino-acid polypeptide reads, in one-letter code: MEVDLLHFEKKYHNCIVAGIDEAGRGPLAGPVVASAVIVDNANIITGIKDSKKLSKKKRELLYEQITSNYAWATAIISHTEIDDINILEATKKACSIAVANLSLEPEIVLVDGNMQFKDERFVSIINGDNLSLSIAAASIIAKVTRDRLMLDLSAEFPQYLWHKNSGYGTKEHIEAINIHGLSPYHRRSFRCC.

Positions 15 to 193 constitute an RNase H type-2 domain; sequence CIVAGIDEAG…PYHRRSFRCC (179 aa). The a divalent metal cation site is built by Asp-21, Glu-22, and Asp-112.

It belongs to the RNase HII family. It depends on Mn(2+) as a cofactor. Mg(2+) serves as cofactor.

Its subcellular location is the cytoplasm. It catalyses the reaction Endonucleolytic cleavage to 5'-phosphomonoester.. Functionally, endonuclease that specifically degrades the RNA of RNA-DNA hybrids. In Rickettsia rickettsii (strain Iowa), this protein is Ribonuclease HII.